A 45-amino-acid polypeptide reads, in one-letter code: Large ribosomal subunit protein bL34 (45 aa).

2 stretches are compositionally biased toward basic residues: residues 1–15 (MKAKSHLSNKKRKRA) and 22–45 (MKTKAGRKILARRRAKGRKRIAIK). The interval 1–45 (MKAKSHLSNKKRKRASGFLARMKTKAGRKILARRRAKGRKRIAIK) is disordered.

It belongs to the bacterial ribosomal protein bL34 family.

The protein is Large ribosomal subunit protein bL34 of Sulfurihydrogenibium sp. (strain YO3AOP1).